A 779-amino-acid polypeptide reads, in one-letter code: Tricorn protease-interacting factor F3 (779 aa).

Substrate-binding positions include Glu102 and 231–235 (GAMEN). A Zn(2+)-binding site is contributed by His266. The active-site Proton acceptor is Glu267. Residues His270 and Glu289 each contribute to the Zn(2+) site.

It belongs to the peptidase M1 family. In terms of assembly, part of the tricorn proteolytic complex. It depends on Zn(2+) as a cofactor.

Its subcellular location is the cytoplasm. In terms of biological role, proteases F1, F2 and F3 degrade oligopeptides produced by Tricorn (themselves probably produced by the proteasome), yielding free amino acids. In Thermoplasma volcanium (strain ATCC 51530 / DSM 4299 / JCM 9571 / NBRC 15438 / GSS1), this protein is Tricorn protease-interacting factor F3 (trf3).